The sequence spans 350 residues: Aldo-keto reductase 1B (350 aa).

Tyrosine 84 (proton donor) is an active-site residue. A substrate-binding site is contributed by histidine 146. 244 to 306 (SPLGSPNRPW…SVTKDRIESN (63 aa)) lines the NADP(+) pocket.

This sequence belongs to the aldo/keto reductase family.

Its subcellular location is the cytoplasm. The catalysed reaction is an alditol + NADP(+) = an aldose + NADPH + H(+). It carries out the reaction all-trans-retinol + NADP(+) = all-trans-retinal + NADPH + H(+). The enzyme catalyses 9-cis-retinol + NADP(+) = 9-cis-retinal + NADPH + H(+). It catalyses the reaction 13-cis-retinol + NADP(+) = 13-cis-retinal + NADPH + H(+). The catalysed reaction is glycerol + NADP(+) = D-glyceraldehyde + NADPH + H(+). It carries out the reaction glycerol + NADP(+) = L-glyceraldehyde + NADPH + H(+). The enzyme catalyses prenol + NADP(+) = 3-methyl-2-butenal + NADPH + H(+). It catalyses the reaction (E)-hex-2-en-1-ol + NADP(+) = (E)-hex-2-enal + NADPH + H(+). The catalysed reaction is (E,E)-2,4-hexadien-1-ol + NADP(+) = (E,E)-2,4-hexadienal + NADPH + H(+). It carries out the reaction a 4-hydroxynonen-1-ol + NADP(+) = a 4-hydroxynonenal + NADPH + H(+). The enzyme catalyses prostaglandin F2alpha + NADP(+) = prostaglandin H2 + NADPH + H(+). It catalyses the reaction allyl alcohol + NADP(+) = acrolein + NADPH + H(+). The catalysed reaction is pyridine 3-methanol + NADP(+) = pyridine-3-carbaldehyde + NADPH + H(+). It carries out the reaction 1-hexadecanoyl-2-(5-oxopentanoyl)-sn-glycero-3-phosphocholine + NADPH + H(+) = 1-hexadecanoyl-2-(5-hydroxypentanoyl)-sn-glycero-3-phosphocholine + NADP(+). The enzyme catalyses 1-hexadecanoyl-2-(7-oxoheptanoyl)-sn-glycero-3-phosphocholine + NADPH + H(+) = 1-hexadecanoyl-2-(7-hydroxyheptanoyl)-sn-glycero-3-phosphocholine + NADP(+). It catalyses the reaction 1-hexadecanoyl-2-(9-oxononanoyl)-sn-glycero-3-phosphocholine + NADPH + H(+) = 1-hexadecanoyl-2-(9-hydroxynonanoyl)-sn-glycero-3-phosphocholine + NADP(+). The catalysed reaction is 1-hexadecanoyl-2-(5-oxopentanoyl)-sn-glycero-3-phosphoethanolamine + NADPH + H(+) = 1-hexadecanoyl-2-(5-hydroxypentanoyl)-sn-glycero-3-phosphoethanolamine + NADP(+). Functionally, catalyzes the NADPH-dependent reduction of a wide variety of carbonyl-containing compounds to their corresponding alcohols. Displays enzymatic activity towards endogenous metabolites such as aromatic and aliphatic aldehydes, ketones, monosaccharides, bile acids and xenobiotics substrates. Key enzyme in the polyol pathway, catalyzes reduction of glucose to sorbitol during hyperglycemia. Reduces steroids and their derivatives and prostaglandins. Through production of prostaglandin F2alpha may regulate the activity of non-muscle myosin II in an autocrine or paracrine fashion; influences border cell and nurse cell stiffness to facilitate border cell cluster migration. Also regulates the cell surface localization of integrins in an autocrine or paracrine fashion; influences border cell adhesion to maintain border cell cluster morphology. In hemocytes, probably contributes to production of sugar alcohols in the hemolymph, which act as alarmins involved in gut-fat body innate immunological communication (GFIC); leads to activation of the imd/Relish signaling pathway in the fat body. The sequence is that of Aldo-keto reductase 1B from Drosophila melanogaster (Fruit fly).